The following is a 415-amino-acid chain: Histidine--tRNA ligase (415 aa).

This sequence belongs to the class-II aminoacyl-tRNA synthetase family. As to quaternary structure, homodimer.

It is found in the cytoplasm. The enzyme catalyses tRNA(His) + L-histidine + ATP = L-histidyl-tRNA(His) + AMP + diphosphate + H(+). This chain is Histidine--tRNA ligase, found in Clostridium botulinum (strain Kyoto / Type A2).